A 589-amino-acid polypeptide reads, in one-letter code: Probable cytochrome P450 49a1 (589 aa).

The disordered stretch occupies residues 56–90 (TGESSNPKKLNVSQQPVTSVATTRTTASSLPAETT). Positions 57-71 (GESSNPKKLNVSQQP) are enriched in polar residues. Low complexity predominate over residues 72–84 (VTSVATTRTTASS). C536 provides a ligand contact to heme.

The protein belongs to the cytochrome P450 family. It depends on heme as a cofactor.

It is found in the endoplasmic reticulum membrane. The protein resides in the microsome membrane. In terms of biological role, may be involved in the metabolism of insect hormones and in the breakdown of synthetic insecticides. This is Probable cytochrome P450 49a1 (Cyp49a1) from Drosophila melanogaster (Fruit fly).